A 109-amino-acid polypeptide reads, in one-letter code: Fluoride-specific ion channel FluC (109 aa).

A run of 3 helical transmembrane segments spans residues 21–41 (FFLN…GFVI), 52–72 (ILLT…LFLY), and 83–103 (LFFY…AGFL).

This sequence belongs to the fluoride channel Fluc/FEX (TC 1.A.43) family.

It localises to the cell inner membrane. It carries out the reaction fluoride(in) = fluoride(out). Functionally, fluoride-specific ion channel. Important for reducing fluoride concentration in the cell, thus reducing its toxicity. This Prochlorococcus marinus (strain MIT 9515) protein is Fluoride-specific ion channel FluC.